A 432-amino-acid polypeptide reads, in one-letter code: G-protein coupled receptor 22 (432 aa).

At 1-45 (MCFSPVLEINMQSESNVTVRDDIEDIDTNMYQPLSYPLSFQVSLT) the chain is on the cytoplasmic side. A helical membrane pass occupies residues 46–66 (GFLMLEIVLGLGSNLTVLVLY). The Extracellular portion of the chain corresponds to 67 to 85 (CMKSNLISSVSNIITMNLH). The chain crosses the membrane as a helical span at residues 86 to 106 (VLDVIICVGCIPLTIVILLLS). At 107-115 (LERNTALIC) the chain is on the cytoplasmic side. A helical transmembrane segment spans residues 116–136 (CFHEACVSFASVSTAINVFAI). Topologically, residues 137 to 156 (TLDRYDISVKPANRILTMGR) are extracellular. A helical transmembrane segment spans residues 157-177 (AVMLMTSIWIFSFFSFLIPFI). The Cytoplasmic portion of the chain corresponds to 178–208 (EVNFFSLQSGNAWENKTLLCVSTSEYYTELG). Residues 209-229 (MYYHLLVQIPIFFFTVIVMLI) form a helical membrane-spanning segment. Residues 230–314 (TYTKILQALN…ERQKRVFKMS (85 aa)) lie on the Extracellular side of the membrane. A helical membrane pass occupies residues 315 to 335 (LLIISTFLLCWTPISVLNTTI). The Cytoplasmic portion of the chain corresponds to 336–348 (LCLGPSDLLVKLR). Residues 349–369 (LCFLVMAYGTTIFHPLLYAFT) traverse the membrane as a helical segment. At 370-432 (RQKFQKVLKS…KCLVPQVVTD (63 aa)) the chain is on the extracellular side.

This sequence belongs to the G-protein coupled receptor 1 family. As to expression, abundant levels detected in the brain. High expression in the heart (at protein level). No detectable expression in other peripheral tissues.

It is found in the cell membrane. Orphan G-protein coupled receptor. Seems to act through a G(i)/G(o) mediated pathway. May be involved in ciliogenesis. This is G-protein coupled receptor 22 from Rattus norvegicus (Rat).